The sequence spans 228 residues: Max-interacting protein 1 (228 aa).

Disordered regions lie at residues 29-76 and 162-228; these read GYAS…NELE and GSTI…SFTS. Residues 43–56 show a composition bias toward basic residues; the sequence is QHSKPPRRLSRAQK. Polar residues predominate over residues 57-70; sequence HSSGSSNTSTANRS. The 53-residue stretch at 67–119 folds into the bHLH domain; that stretch reads ANRSTHNELEKNRRAHLRLCLERLKVLIPLGPDCTRHTTLGLLNKAKAHIKKL. A compositionally biased stretch (acidic residues) spans 173–183; it reads EREEIEVDVES. A compositionally biased stretch (polar residues) spans 216-228; the sequence is GYSSASVKLSFTS.

As to quaternary structure, efficient DNA binding requires dimerization with another bHLH protein. Binds DNA as a heterodimer with MAX. Interacts with SMC3. Interacts with RNF17.

It is found in the nucleus. Functionally, transcriptional repressor. MXI1 binds with MAX to form a sequence-specific DNA-binding protein complex which recognizes the core sequence 5'-CAC[GA]TG-3'. MXI1 thus antagonizes MYC transcriptional activity by competing for MAX. In Rattus norvegicus (Rat), this protein is Max-interacting protein 1 (Mxi1).